The following is a 62-amino-acid chain: Sperm protamine P1 (62 aa).

Residues 1–62 (MARYRHSRSR…RYSRRRRRRY (62 aa)) are disordered.

It belongs to the protamine P1 family. Testis.

The protein localises to the nucleus. Its subcellular location is the chromosome. In terms of biological role, protamines substitute for histones in the chromatin of sperm during the haploid phase of spermatogenesis. They compact sperm DNA into a highly condensed, stable and inactive complex. The chain is Sperm protamine P1 (PRM1) from Dendrolagus dorianus (Doria's tree-kangaroo).